We begin with the raw amino-acid sequence, 382 residues long: 4-hydroxy-3-methylbut-2-en-1-yl diphosphate synthase (flavodoxin) (382 aa).

4 residues coordinate [4Fe-4S] cluster: Cys-290, Cys-293, Cys-327, and Glu-334.

This sequence belongs to the IspG family. [4Fe-4S] cluster is required as a cofactor.

It catalyses the reaction (2E)-4-hydroxy-3-methylbut-2-enyl diphosphate + oxidized [flavodoxin] + H2O + 2 H(+) = 2-C-methyl-D-erythritol 2,4-cyclic diphosphate + reduced [flavodoxin]. The protein operates within isoprenoid biosynthesis; isopentenyl diphosphate biosynthesis via DXP pathway; isopentenyl diphosphate from 1-deoxy-D-xylulose 5-phosphate: step 5/6. Its function is as follows. Converts 2C-methyl-D-erythritol 2,4-cyclodiphosphate (ME-2,4cPP) into 1-hydroxy-2-methyl-2-(E)-butenyl 4-diphosphate. The polypeptide is 4-hydroxy-3-methylbut-2-en-1-yl diphosphate synthase (flavodoxin) (Rhodopirellula baltica (strain DSM 10527 / NCIMB 13988 / SH1)).